Reading from the N-terminus, the 67-residue chain is Putative sodium channel alpha-toxin Acra7 (67 aa).

The LCN-type CS-alpha/beta domain maps to 2–66 (RDGYIVKPTN…PIKDPNQDCT (65 aa)). 4 cysteine pairs are disulfide-bonded: C12–C65, C16–C37, C23–C47, and C27–C49. Position 67 (R67) is a propeptide, removed by a carboxypeptidase.

Belongs to the long (4 C-C) scorpion toxin superfamily. Sodium channel inhibitor family. Alpha subfamily. Expressed by the venom gland.

The protein resides in the secreted. Alpha toxins bind voltage-independently at site-3 of sodium channels (Nav) and inhibit the inactivation of the activated channels, thereby blocking neuronal transmission. The polypeptide is Putative sodium channel alpha-toxin Acra7 (Androctonus crassicauda (Arabian fat-tailed scorpion)).